We begin with the raw amino-acid sequence, 252 residues long: Hydrolase phiM (252 aa).

Ser-126 (charge relay system) is an active-site residue.

Belongs to the LovG family.

The protein operates within secondary metabolite biosynthesis. Functionally, hydrolase; part of the gene cluster that mediates the biosynthesis of the antihypercholesterolemic agents phomoidrides which are dimeric anhydrides. Within the pathway, phiM releases the C12-fatty acyl chain from phiA. The pathway begins with the highly reducing polyketide synthase tstA that catalyzes the formation of a C12-fatty acyl-ACP, starting from one acetate and 5 malonate units. The hydrolase tstM is involved in the release of the C12-fatty acyl chain from phiA. The alkylcitrate synthase (ACS) tstJ and the alkylcitrate dehydratase (ACDH) tstI then give rise to decarboxylated monomeric anhydrides by coupling the C12-fatty acyl chain with oxalacetic acid. The cyclase tstC is responsible for the dimerization of the monomeric anhydrides which leads to the production of prephomoidride that contains the characteristic bicyclo[4.3.1]deca-1,6-diene system of phomoidrides. Iterative oxidation catalyzed by the alpha-ketoglutarate-dependent dioxygenase tstK produced then phomoidride A. Finally, the methyltransferase tstE converts phomoidride A to phomoidride B via an acetalization reaction. The phosphatidylethanolamine-binding protein tstB and tstN are not essential for dimerization and their functions have still to be determined. The protein is Hydrolase phiM of Talaromyces stipitatus (strain ATCC 10500 / CBS 375.48 / QM 6759 / NRRL 1006) (Penicillium stipitatum).